Here is a 118-residue protein sequence, read N- to C-terminus: Large ribosomal subunit protein uL18 (118 aa).

The disordered stretch occupies residues 1–24 (MISKPDKNKIRQKRHRRVRGKLSG). The segment covering 10–20 (IRQKRHRRVRG) has biased composition (basic residues).

It belongs to the universal ribosomal protein uL18 family. In terms of assembly, part of the 50S ribosomal subunit; part of the 5S rRNA/L5/L18/L25 subcomplex. Contacts the 5S and 23S rRNAs.

Functionally, this is one of the proteins that bind and probably mediate the attachment of the 5S RNA into the large ribosomal subunit, where it forms part of the central protuberance. The sequence is that of Large ribosomal subunit protein uL18 from Streptococcus agalactiae serotype III (strain NEM316).